A 222-amino-acid chain; its full sequence is Putative N-acetylmannosamine-6-phosphate 2-epimerase (222 aa).

The protein belongs to the NanE family.

The catalysed reaction is an N-acyl-D-glucosamine 6-phosphate = an N-acyl-D-mannosamine 6-phosphate. It functions in the pathway amino-sugar metabolism; N-acetylneuraminate degradation; D-fructose 6-phosphate from N-acetylneuraminate: step 3/5. In terms of biological role, converts N-acetylmannosamine-6-phosphate (ManNAc-6-P) to N-acetylglucosamine-6-phosphate (GlcNAc-6-P). The polypeptide is Putative N-acetylmannosamine-6-phosphate 2-epimerase (Staphylococcus aureus (strain bovine RF122 / ET3-1)).